The chain runs to 106 residues: UPF0091 protein RP266 (106 aa).

This sequence belongs to the UPF0091 family.

The sequence is that of UPF0091 protein RP266 from Rickettsia prowazekii (strain Madrid E).